The sequence spans 233 residues: Large ribosomal subunit protein uL1 (233 aa).

The protein belongs to the universal ribosomal protein uL1 family. Part of the 50S ribosomal subunit.

In terms of biological role, binds directly to 23S rRNA. The L1 stalk is quite mobile in the ribosome, and is involved in E site tRNA release. Its function is as follows. Protein L1 is also a translational repressor protein, it controls the translation of the L11 operon by binding to its mRNA. The chain is Large ribosomal subunit protein uL1 from Shewanella putrefaciens (strain CN-32 / ATCC BAA-453).